The chain runs to 515 residues: Probable cytochrome P450 6d4 (515 aa).

A heme-binding site is contributed by C457.

Belongs to the cytochrome P450 family. It depends on heme as a cofactor.

The protein localises to the endoplasmic reticulum membrane. The protein resides in the microsome membrane. Its function is as follows. May be involved in the metabolism of insect hormones and in the breakdown of synthetic insecticides. This chain is Probable cytochrome P450 6d4 (Cyp6d4), found in Drosophila melanogaster (Fruit fly).